A 183-amino-acid polypeptide reads, in one-letter code: ATP synthase subunit delta (183 aa).

The protein belongs to the ATPase delta chain family. As to quaternary structure, F-type ATPases have 2 components, F(1) - the catalytic core - and F(0) - the membrane proton channel. F(1) has five subunits: alpha(3), beta(3), gamma(1), delta(1), epsilon(1). F(0) has three main subunits: a(1), b(2) and c(10-14). The alpha and beta chains form an alternating ring which encloses part of the gamma chain. F(1) is attached to F(0) by a central stalk formed by the gamma and epsilon chains, while a peripheral stalk is formed by the delta and b chains.

Its subcellular location is the cell inner membrane. Its function is as follows. F(1)F(0) ATP synthase produces ATP from ADP in the presence of a proton or sodium gradient. F-type ATPases consist of two structural domains, F(1) containing the extramembraneous catalytic core and F(0) containing the membrane proton channel, linked together by a central stalk and a peripheral stalk. During catalysis, ATP synthesis in the catalytic domain of F(1) is coupled via a rotary mechanism of the central stalk subunits to proton translocation. In terms of biological role, this protein is part of the stalk that links CF(0) to CF(1). It either transmits conformational changes from CF(0) to CF(1) or is implicated in proton conduction. The sequence is that of ATP synthase subunit delta from Thermosipho africanus (strain TCF52B).